The primary structure comprises 279 residues: MALSSALIKIFITFLFLQNHVNSQYSSPSKPQPSLGSTISFSITKFDDESPNIFVKGDASISNGVLSLTKTDKYSGKPLQKSVGRATHLTPIHIWDETSGELADFSTSFSFIVNTNGSRLHGDGFTFFLGPLHFDLPKNSSGGYLGLFNPETALIPSQNPIVAIEFDSFTNGWDPASPSQYPHIGIDVGSIDSRATVNWPLDFVQTNALGEASINYNSESKRLSVFVAYPGSGKNATGVSFVVDLRSVLPEWVRVGFSAATGELVETHDIINWSFEAAL.

Positions 1–23 (MALSSALIKIFITFLFLQNHVNS) are cleaved as a signal peptide. N-linked (GlcNAc...) asparagine glycosylation is found at Asn116, Asn139, Asn235, and Asn272.

This sequence belongs to the leguminous lectin family.

Its function is as follows. May be involved in arbuscular mycorrhizal (AM) symbiosis with AM fungi. This chain is Lectin 9, found in Medicago truncatula (Barrel medic).